Here is a 227-residue protein sequence, read N- to C-terminus: Lipoprotein-releasing system ATP-binding protein LolD (227 aa).

One can recognise an ABC transporter domain in the interval 7-227 (LSCRNLGKSY…RLEGGRLVEA (221 aa)). 43–50 (GTSGSGKS) provides a ligand contact to ATP.

This sequence belongs to the ABC transporter superfamily. Lipoprotein translocase (TC 3.A.1.125) family. The complex is composed of two ATP-binding proteins (LolD) and two transmembrane proteins (LolC and LolE).

Its subcellular location is the cell inner membrane. Functionally, part of the ABC transporter complex LolCDE involved in the translocation of mature outer membrane-directed lipoproteins, from the inner membrane to the periplasmic chaperone, LolA. Responsible for the formation of the LolA-lipoprotein complex in an ATP-dependent manner. The polypeptide is Lipoprotein-releasing system ATP-binding protein LolD (Pseudomonas syringae pv. tomato (strain ATCC BAA-871 / DC3000)).